A 215-amino-acid chain; its full sequence is Putative BTB/POZ domain-containing protein At2g05330 (215 aa).

A BTB domain is found at 17-87 (SWQKIGKLTY…LYSDGSMLSS (71 aa)).

It functions in the pathway protein modification; protein ubiquitination. Its function is as follows. May act as a substrate-specific adapter of an E3 ubiquitin-protein ligase complex (CUL3-RBX1-BTB) which mediates the ubiquitination and subsequent proteasomal degradation of target proteins. This Arabidopsis thaliana (Mouse-ear cress) protein is Putative BTB/POZ domain-containing protein At2g05330.